Reading from the N-terminus, the 90-residue chain is uncharacterized protein (90 aa).

The helical transmembrane segment at 46-62 (MALLVVFLVSLFACTTI) threads the bilayer.

Its subcellular location is the membrane. This is an uncharacterized protein from Haemophilus influenzae (strain ATCC 51907 / DSM 11121 / KW20 / Rd).